Consider the following 93-residue polypeptide: MKILLLTLVVVTIVCLDLAYTRTCYRTHPYKPETCPPGQNLCYKKSWCDAFCSSRGKVIELGCTAKCPTVKHGKDINCCATDNCNTVANWKSR.

An N-terminal signal peptide occupies residues 1–21 (MKILLLTLVVVTIVCLDLAYT). 5 disulfide bridges follow: Cys-24–Cys-42, Cys-35–Cys-63, Cys-48–Cys-52, Cys-67–Cys-78, and Cys-79–Cys-84.

It belongs to the three-finger toxin family. Long-chain subfamily. Type II alpha-neurotoxin sub-subfamily. In terms of tissue distribution, expressed by the venom gland.

The protein resides in the secreted. Its function is as follows. Binds with high affinity to muscular (alpha-1/CHRNA1) and neuronal (alpha-7/CHRNA7) nicotinic acetylcholine receptor (nAChR) and inhibits acetylcholine from binding to the receptor, thereby impairing neuromuscular and neuronal transmission. The polypeptide is Long neurotoxin 2 (Hydrophis hardwickii (Hardwick's spine-bellied seasnake)).